We begin with the raw amino-acid sequence, 414 residues long: Probable cytochrome P450 127A1 (414 aa).

Cys-364 provides a ligand contact to heme.

The protein belongs to the cytochrome P450 family. The cofactor is heme.

Cytochromes P450 are a group of heme-thiolate monooxygenases. They oxidize a variety of structurally unrelated compounds, including steroids, fatty acids, and xenobiotics. This is Probable cytochrome P450 127A1 (cyp127A1) from Sinorhizobium fredii (strain NBRC 101917 / NGR234).